The chain runs to 287 residues: Serine/arginine-rich SC35-like splicing factor SCL33 (287 aa).

Residues 1 to 34 form a disordered region; sequence MRGRSYTPSPPRGYGRRGRSPSPRGRYGGRSRDL. S9 and S20 each carry phosphoserine. One can recognise an RRM domain in the interval 36–114; it reads TSLLVRNLRH…RELTVVFAEE (79 aa). Residues 116 to 132 show a composition bias toward basic and acidic residues; the sequence is RKKPTEMRARERGGGRF. The interval 116-287 is disordered; sequence RKKPTEMRAR…QYDEDRSPSQ (172 aa). Phosphoserine is present on residues S165, S175, S177, S188, and S190. A compositionally biased stretch (basic and acidic residues) spans 177-187; sequence SPREERYDGRR. Residues 220-237 show a composition bias toward basic residues; sequence SISRSPRRSRSPSPKRNR. A phosphoserine mark is found at S238, S248, S271, S284, and S286. The segment covering 244–260 has biased composition (basic residues); that stretch reads SISRSPRRSRSPRRSRR. The span at 278–287 shows a compositional bias: basic and acidic residues; that stretch reads QYDEDRSPSQ.

The protein belongs to the splicing factor SR family. SCL subfamily. As to quaternary structure, component of the spliceosome. Homodimer. Interacts with AFC2, CYP59, RS2Z33, RNU1 and SR45. The interaction with AFC2 depends on phosphorylation status. Post-translationally, phosphorylated by AFC2. Ubiquitous. Mostly expressed in roots, fruits and flowers, and, to a lower extent, in leaves.

Its subcellular location is the nucleus speckle. It localises to the nucleus. The protein resides in the nucleoplasm. It is found in the cytoplasm. In terms of biological role, involved in intron recognition and spliceosome assembly. Binds to multiple 5'-GAAG-3' repeats found in its third intron, suggesting autoregulation of alternative splicing. May be necessary for accurate splicing of the 3' region of introns. The protein is Serine/arginine-rich SC35-like splicing factor SCL33 (SCL33) of Arabidopsis thaliana (Mouse-ear cress).